Here is a 243-residue protein sequence, read N- to C-terminus: Late expression factor 1 (243 aa).

Belongs to the baculoviridae LEF-1 family.

Required for late and very late gene expression. In Orgyia pseudotsugata multicapsid polyhedrosis virus (OpMNPV), this protein is Late expression factor 1 (LEF-1).